A 240-amino-acid chain; its full sequence is Uridylate kinase (240 aa).

13 to 16 (KLSG) provides a ligand contact to ATP. Residues 21 to 26 (GDKGFG) are involved in allosteric activation by GTP. Gly55 lines the UMP pocket. Positions 56 and 60 each coordinate ATP. UMP is bound by residues Asp75 and 136-143 (IGNPYFST). ATP contacts are provided by Asn164, Tyr170, and Asp173.

Belongs to the UMP kinase family. As to quaternary structure, homohexamer.

Its subcellular location is the cytoplasm. It catalyses the reaction UMP + ATP = UDP + ADP. The protein operates within pyrimidine metabolism; CTP biosynthesis via de novo pathway; UDP from UMP (UMPK route): step 1/1. Its activity is regulated as follows. Allosterically activated by GTP. Inhibited by UTP. Functionally, catalyzes the reversible phosphorylation of UMP to UDP. In Staphylococcus epidermidis (strain ATCC 35984 / DSM 28319 / BCRC 17069 / CCUG 31568 / BM 3577 / RP62A), this protein is Uridylate kinase.